The chain runs to 952 residues: Glycine dehydrogenase (decarboxylating) (952 aa).

N6-(pyridoxal phosphate)lysine is present on Lys-696.

This sequence belongs to the GcvP family. In terms of assembly, the glycine cleavage system is composed of four proteins: P, T, L and H. Requires pyridoxal 5'-phosphate as cofactor.

The catalysed reaction is N(6)-[(R)-lipoyl]-L-lysyl-[glycine-cleavage complex H protein] + glycine + H(+) = N(6)-[(R)-S(8)-aminomethyldihydrolipoyl]-L-lysyl-[glycine-cleavage complex H protein] + CO2. In terms of biological role, the glycine cleavage system catalyzes the degradation of glycine. The P protein binds the alpha-amino group of glycine through its pyridoxal phosphate cofactor; CO(2) is released and the remaining methylamine moiety is then transferred to the lipoamide cofactor of the H protein. This Pelagibacter ubique (strain HTCC1062) protein is Glycine dehydrogenase (decarboxylating).